Here is an 89-residue protein sequence, read N- to C-terminus: UPF0298 protein GTNG_0961 (89 aa).

Belongs to the UPF0298 family.

The protein resides in the cytoplasm. This is UPF0298 protein GTNG_0961 from Geobacillus thermodenitrificans (strain NG80-2).